Here is a 510-residue protein sequence, read N- to C-terminus: Lysine--tRNA ligase (510 aa).

Residues E420 and E427 each coordinate Mg(2+).

This sequence belongs to the class-II aminoacyl-tRNA synthetase family. In terms of assembly, homodimer. It depends on Mg(2+) as a cofactor.

The protein localises to the cytoplasm. The enzyme catalyses tRNA(Lys) + L-lysine + ATP = L-lysyl-tRNA(Lys) + AMP + diphosphate. In Vibrio campbellii (strain ATCC BAA-1116), this protein is Lysine--tRNA ligase.